Here is a 471-residue protein sequence, read N- to C-terminus: ATP synthase subunit beta (471 aa).

Residue 153-160 (GGAGVGKT) participates in ATP binding.

Belongs to the ATPase alpha/beta chains family. In terms of assembly, F-type ATPases have 2 components, CF(1) - the catalytic core - and CF(0) - the membrane proton channel. CF(1) has five subunits: alpha(3), beta(3), gamma(1), delta(1), epsilon(1). CF(0) has four main subunits: a(1), b(1), b'(1) and c(9-12).

It localises to the cell membrane. It carries out the reaction ATP + H2O + 4 H(+)(in) = ADP + phosphate + 5 H(+)(out). In terms of biological role, produces ATP from ADP in the presence of a proton gradient across the membrane. The catalytic sites are hosted primarily by the beta subunits. This chain is ATP synthase subunit beta, found in Roseiflexus sp. (strain RS-1).